The primary structure comprises 444 residues: Phosphoglucosamine mutase (444 aa).

The active-site Phosphoserine intermediate is Ser103. Positions 103, 241, 243, and 245 each coordinate Mg(2+). Ser103 carries the phosphoserine modification.

This sequence belongs to the phosphohexose mutase family. Requires Mg(2+) as cofactor. In terms of processing, activated by phosphorylation.

It catalyses the reaction alpha-D-glucosamine 1-phosphate = D-glucosamine 6-phosphate. In terms of biological role, catalyzes the conversion of glucosamine-6-phosphate to glucosamine-1-phosphate. The protein is Phosphoglucosamine mutase of Deinococcus radiodurans (strain ATCC 13939 / DSM 20539 / JCM 16871 / CCUG 27074 / LMG 4051 / NBRC 15346 / NCIMB 9279 / VKM B-1422 / R1).